Here is a 195-residue protein sequence, read N- to C-terminus: Pyridoxal 5'-phosphate synthase subunit PdxT (195 aa).

G46–S48 contacts L-glutamine. Catalysis depends on C78, which acts as the Nucleophile. L-glutamine-binding positions include R107 and I135–R136. Residues H172 and E174 each act as charge relay system in the active site.

This sequence belongs to the glutaminase PdxT/SNO family. As to quaternary structure, in the presence of PdxS, forms a dodecamer of heterodimers. Only shows activity in the heterodimer.

It carries out the reaction aldehydo-D-ribose 5-phosphate + D-glyceraldehyde 3-phosphate + L-glutamine = pyridoxal 5'-phosphate + L-glutamate + phosphate + 3 H2O + H(+). The enzyme catalyses L-glutamine + H2O = L-glutamate + NH4(+). It participates in cofactor biosynthesis; pyridoxal 5'-phosphate biosynthesis. Functionally, catalyzes the hydrolysis of glutamine to glutamate and ammonia as part of the biosynthesis of pyridoxal 5'-phosphate. The resulting ammonia molecule is channeled to the active site of PdxS. The protein is Pyridoxal 5'-phosphate synthase subunit PdxT of Corynebacterium jeikeium (strain K411).